We begin with the raw amino-acid sequence, 482 residues long: Zinc finger protein 223 (482 aa).

Residues 8–78 (VTFKDVAVVF…DIATQREGNS (71 aa)) enclose the KRAB domain. C2H2-type zinc fingers lie at residues 176 to 198 (HSCD…QRVH), 204 to 226 (FKCD…QRVH), 232 to 254 (FKCE…CKLH), 260 to 282 (YNCE…QRIH), and 288 to 310 (FKCE…CVVH). The segment at 316 to 338 (NSTGEYGKGFIRRLDLCKHQTIH) adopts a C2H2-type 6; degenerate zinc-finger fold. 3 C2H2-type zinc fingers span residues 344–366 (YNCK…QRVH), 372–394 (YKCD…HRAH), and 400–422 (YNCD…KRLH). A C2H2-type 10; degenerate zinc finger spans residues 428-450 (FKCEDCGKKLVYRSYRKDQQKNH).

It belongs to the krueppel C2H2-type zinc-finger protein family.

Its subcellular location is the nucleus. Functionally, may be involved in transcriptional regulation. This Homo sapiens (Human) protein is Zinc finger protein 223 (ZNF223).